Consider the following 379-residue polypeptide: Chaperone protein DnaJ (379 aa).

The J domain maps to 5-70 (DYYEILGLDK…QKKAQYDQFG (66 aa)). The segment at 135–217 (GVEKEISVTR…CRGKGIVRKH (83 aa)) adopts a CR-type zinc-finger fold. Positions 148, 151, 165, 168, 191, 194, 205, and 208 each coordinate Zn(2+). 4 CXXCXGXG motif repeats span residues 148–155 (CETCNGTG), 165–172 (CDKCNGTG), 191–198 (CDKCGGRG), and 205–212 (CEECRGKG).

This sequence belongs to the DnaJ family. Homodimer. It depends on Zn(2+) as a cofactor.

The protein resides in the cytoplasm. Participates actively in the response to hyperosmotic and heat shock by preventing the aggregation of stress-denatured proteins and by disaggregating proteins, also in an autonomous, DnaK-independent fashion. Unfolded proteins bind initially to DnaJ; upon interaction with the DnaJ-bound protein, DnaK hydrolyzes its bound ATP, resulting in the formation of a stable complex. GrpE releases ADP from DnaK; ATP binding to DnaK triggers the release of the substrate protein, thus completing the reaction cycle. Several rounds of ATP-dependent interactions between DnaJ, DnaK and GrpE are required for fully efficient folding. Also involved, together with DnaK and GrpE, in the DNA replication of plasmids through activation of initiation proteins. In Clostridium kluyveri (strain ATCC 8527 / DSM 555 / NBRC 12016 / NCIMB 10680 / K1), this protein is Chaperone protein DnaJ.